A 102-amino-acid chain; its full sequence is Methane monooxygenase component D (102 aa).

In terms of assembly, the soluble methane monooxygenase (sMMO) consists of four components A/MMOH (composed of alpha/MmoX, beta/MmoY and gamma/MmoZ), B/MMOB (MmoB), C/MMOR (MmoC) and D/MMOD (MmoD).

In Methylosinus trichosporium, this protein is Methane monooxygenase component D (mmoD).